The sequence spans 332 residues: Nuclear migration protein nudC (332 aa).

Positions 122–161 are disordered; sequence RQQLLDSAGGEPSASNRDGISKPIEKVDDESDKSELGKLM. Positions 168–259 constitute a CS domain; that stretch reads CTLENYTWTQ…NKMNWWSRLV (92 aa).

It belongs to the nudC family. In terms of assembly, interacts with PCID2.

The protein localises to the cytoplasm. Chaperone protein with functions in nuclear localization and cytoplasmic mRNA trafficking. In postmitotic neurons, acts with nudE downstream of dar1 to ensure correct positioning of the nuclei in primary dendrites and as a consequence, is required for determining multipolar neuron morphology. Stabilizes PCID2 in the cytoplasm and thereby is required for promoting cytoplasmic mRNA trafficking. This is Nuclear migration protein nudC from Drosophila melanogaster (Fruit fly).